The sequence spans 132 residues: Small ribosomal subunit protein uS8 (132 aa).

Part of the 30S ribosomal subunit. Contacts proteins S5 and S12. In terms of processing, a modified and unmodified form exist; the nature of the modification(s) is unknown.

In terms of biological role, one of the primary rRNA binding proteins, it binds directly to 16S rRNA central domain where it helps coordinate assembly of the platform of the 30S subunit. This Rhodopseudomonas palustris (strain ATCC BAA-98 / CGA009) protein is Small ribosomal subunit protein uS8.